The primary structure comprises 143 residues: Small ribosomal subunit protein uS12 (143 aa).

Belongs to the universal ribosomal protein uS12 family. In terms of assembly, component of the 40S small ribosomal subunit.

Its subcellular location is the cytoplasm. The protein resides in the cytosol. It localises to the rough endoplasmic reticulum. The protein is Small ribosomal subunit protein uS12 (rps23) of Gillichthys mirabilis (Long-jawed mudsucker).